The chain runs to 442 residues: Putative neutral sphingomyelinase (442 aa).

Mg(2+) is bound at residue glutamate 46. Catalysis depends on histidine 264, which acts as the Proton acceptor. The interval 309–330 is disordered; it reads ALTGEDDQSSQHQPEIQCNGSS. Over residues 318–330 the composition is skewed to polar residues; the sequence is SQHQPEIQCNGSS. 2 helical membrane-spanning segments follow: residues 362–384 and 391–413; these read RILY…EFTA and IFLL…ASIW.

Belongs to the neutral sphingomyelinase family.

It localises to the membrane. The enzyme catalyses a sphingomyelin + H2O = phosphocholine + an N-acylsphing-4-enine + H(+). Its pathway is lipid metabolism; sphingolipid metabolism. The protein is Putative neutral sphingomyelinase of Drosophila melanogaster (Fruit fly).